We begin with the raw amino-acid sequence, 515 residues long: Forkhead box protein H1 (515 aa).

The disordered stretch occupies residues 55–103; it reads YREGGTWSPDRGSMHGLSPGTQEGSCTQAEGTKDSLGGDETLSRKSKKK. Positions 73–84 are enriched in polar residues; that stretch reads PGTQEGSCTQAE. The fork-head DNA-binding region spans 110–206; it reads KPPYSYLAMI…MKLQNTALTR (97 aa). The disordered stretch occupies residues 307–399; the sequence is YPQSKPTRNG…EPPKKMPLLS (93 aa). Residues 322-339 are compositionally biased toward low complexity; sequence SASHSTYSSSSSSISTIS. Residues 375–388 are compositionally biased toward polar residues; the sequence is STPSSDTDAGNYSP. The interval 377 to 503 is SMAD-interaction domain (SID); the sequence is PSSDTDAGNY…PSFLGQCLGS (127 aa). The short motif at 402 to 406 is the Fast/FoxH1 motif 1 (FM1) element; sequence LPTSY. The short motif at 412–418 is the Fast/FoxH1 motif 2 (FM2) element; it reads PNVVAPP. Residues 467-488 carry the SMAD-interaction motif (SIM) motif; sequence LDNMLKTVPPNKSVFDVLTSHP.

In terms of assembly, ARF1 contains 2 smad2s, 1 smad4 and 1 foxh1/fast-1 protein. Interaction with smad4 is most likely indirect through interaction with the MH2 domain of smad2. Binds to the MH2 domain of smad3, which can incorporate into the ARF1 complex. The ARF1 and ARF2 complexes are activated by distinct TGF-beta family members; formation of ARF1 is promoted by activin. Interacts (via Fork-head domain) with gtf2ird1/wbscr11 (via repeats 4-5).

It is found in the nucleus. Transcriptional activator. Recognizes and binds to the DNA sequence 5'-TGT[GT][GT]ATT-3'. Upon TGF-beta induction, forms a transcriptionally active complex with smad2 and smad4 called activin-responsive factor 1 (ARF1), which binds a site on the mix-B/mix.2 promoter called the activin response element (ARE). Binds to activated smads and the ARE with much lower affinity than fast3. Necessary for the first steps in mesoderm specification, directly inducing mesodermal genes. Acts with fast3 to control the convergent extension movements of gastrulation. Binds to the proximal element (PE) of the gsc gene and cooperates with gtf2ird1/wbscr11 and SMAD proteins to regulate gsc transcription. The protein is Forkhead box protein H1 of Xenopus tropicalis (Western clawed frog).